Consider the following 70-residue polypeptide: Large ribosomal subunit protein bL31c (70 aa).

The protein belongs to the bacterial ribosomal protein bL31 family. Type A subfamily. Part of the 50S ribosomal subunit.

The protein localises to the plastid. It localises to the chloroplast. Functionally, binds the 23S rRNA. This is Large ribosomal subunit protein bL31c from Emiliania huxleyi (Coccolithophore).